The following is a 237-amino-acid chain: 3-oxoacyl-[acyl-carrier-protein] reductase (237 aa).

Position 1 is an N-acetylmethionine (methionine 1). NADP(+) contacts are provided by residues 11–14 (SRGI) and 34–35 (RN). Lysine 40 is subject to N6-acetyllysine. Residues aspartate 56 and 83–85 (AAG) each bind NADP(+). Position 96 is an N6-acetyllysine (lysine 96). Serine 135 contacts substrate. NADP(+)-binding positions include tyrosine 148, lysine 152, and 181–183 (VHT). The Proton acceptor role is filled by tyrosine 148. An N6-acetyllysine modification is found at lysine 195.

It belongs to the short-chain dehydrogenases/reductases (SDR) family. As to quaternary structure, homotetramer (in vitro). Heterotetramer with HSD17B8; contains two molecules each of HSD17B8 and CBR4. Does not form homotetramers when HSD17B8 is coexpressed, only heterotetramers (in vitro). Detected in liver and kidney (at protein level). Displays the highest expression in neuronal and muscle tissues.

The protein localises to the mitochondrion matrix. The enzyme catalyses a (3R)-hydroxyacyl-[ACP] + NADP(+) = a 3-oxoacyl-[ACP] + NADPH + H(+). It carries out the reaction a quinone + NADPH + H(+) = a quinol + NADP(+). Its pathway is lipid metabolism; fatty acid biosynthesis. Functionally, component of the heterotetramer complex KAR (3-ketoacyl-[acyl carrier protein] reductase or 3-ketoacyl-[ACP] reductase) that forms part of the mitochondrial fatty acid synthase (mtFAS). Beta-subunit of the KAR heterotetramer complex, responsible for the 3-ketoacyl-ACP reductase activity of the mtFAS, reduces 3-oxoacyl-[ACP] to (3R)-hydroxyacyl-[ACP] in a NADPH-dependent manner with no chain length preference, thereby participating in mitochondrial fatty acid biosynthesis. The homotetramer has NADPH-dependent quinone reductase activity (in vitro), hence could play a role in protection against cytotoxicity of exogenous quinones. As a heterotetramer, it can also reduce 9,10-phenanthrenequinone, 1,4-benzoquinone and various other o-quinones and p-quinones (in vitro). This is 3-oxoacyl-[acyl-carrier-protein] reductase (CBR4) from Homo sapiens (Human).